The sequence spans 290 residues: 33 kDa chaperonin (290 aa).

2 disulfides stabilise this stretch: Cys235–Cys237 and Cys268–Cys271.

The protein belongs to the HSP33 family. Post-translationally, under oxidizing conditions two disulfide bonds are formed involving the reactive cysteines. Under reducing conditions zinc is bound to the reactive cysteines and the protein is inactive.

The protein resides in the cytoplasm. Its function is as follows. Redox regulated molecular chaperone. Protects both thermally unfolding and oxidatively damaged proteins from irreversible aggregation. Plays an important role in the bacterial defense system toward oxidative stress. This is 33 kDa chaperonin from Streptococcus pyogenes serotype M49.